The chain runs to 481 residues: Bifunctional protein HldE (481 aa).

Residues 1–318 (MKVTLPDFRR…ENAIRGRAET (318 aa)) are ribokinase. 195–198 (NLSE) serves as a coordination point for ATP. The active site involves aspartate 264. Residues 344 to 481 (MTNGIFDILH…KRRAGQRTVV (138 aa)) form a cytidylyltransferase region.

This sequence in the N-terminal section; belongs to the carbohydrate kinase PfkB family. It in the C-terminal section; belongs to the cytidylyltransferase family. As to quaternary structure, homodimer.

It carries out the reaction D-glycero-beta-D-manno-heptose 7-phosphate + ATP = D-glycero-beta-D-manno-heptose 1,7-bisphosphate + ADP + H(+). The enzyme catalyses D-glycero-beta-D-manno-heptose 1-phosphate + ATP + H(+) = ADP-D-glycero-beta-D-manno-heptose + diphosphate. It participates in nucleotide-sugar biosynthesis; ADP-L-glycero-beta-D-manno-heptose biosynthesis; ADP-L-glycero-beta-D-manno-heptose from D-glycero-beta-D-manno-heptose 7-phosphate: step 1/4. Its pathway is nucleotide-sugar biosynthesis; ADP-L-glycero-beta-D-manno-heptose biosynthesis; ADP-L-glycero-beta-D-manno-heptose from D-glycero-beta-D-manno-heptose 7-phosphate: step 3/4. Functionally, catalyzes the phosphorylation of D-glycero-D-manno-heptose 7-phosphate at the C-1 position to selectively form D-glycero-beta-D-manno-heptose-1,7-bisphosphate. In terms of biological role, catalyzes the ADP transfer from ATP to D-glycero-beta-D-manno-heptose 1-phosphate, yielding ADP-D-glycero-beta-D-manno-heptose. This chain is Bifunctional protein HldE, found in Sodalis glossinidius (strain morsitans).